A 108-amino-acid polypeptide reads, in one-letter code: UPF0060 membrane protein Sputw3181_1172 (108 aa).

A run of 4 helical transmembrane segments spans residues 3–23 (VITT…GCYL), 31–51 (GASA…AWLL), 63–83 (AAYG…VDGI), and 87–107 (RWDL…MFAP).

Belongs to the UPF0060 family.

The protein resides in the cell inner membrane. This Shewanella sp. (strain W3-18-1) protein is UPF0060 membrane protein Sputw3181_1172.